Here is a 247-residue protein sequence, read N- to C-terminus: MKFLVDTHAHTIASTHAYSTLHDYLNVAKEKGIKLFAITDHGPDMADAPHFWHFVNMRVLPRIIDGVGVLRGIEANIKNQQGDIDFFGDYLKQLDIVLAGFHEPVFPPSTAENHTQALINCIESGKVDIISHPGNPAYPIDIERVAQAAAKHNVALEINNSSFLTSRKGSEKSCRAIALAVKEAGGLLVMGSDSHVAFSLGDFDKAVEVIEAVQFPIERLLNRSPEALLCFLSARGHDSLDEYADLV.

The Zn(2+) site is built by His8, His10, His16, His41, Glu74, His102, His132, Asp193, and His195.

This sequence belongs to the PHP family. It depends on Zn(2+) as a cofactor.

The polypeptide is Probable phosphatase swp_1620 (Shewanella piezotolerans (strain WP3 / JCM 13877)).